The following is a 290-amino-acid chain: 33 kDa chaperonin (290 aa).

2 cysteine pairs are disulfide-bonded: C235/C237 and C268/C271.

It belongs to the HSP33 family. Under oxidizing conditions two disulfide bonds are formed involving the reactive cysteines. Under reducing conditions zinc is bound to the reactive cysteines and the protein is inactive.

It localises to the cytoplasm. Functionally, redox regulated molecular chaperone. Protects both thermally unfolding and oxidatively damaged proteins from irreversible aggregation. Plays an important role in the bacterial defense system toward oxidative stress. This chain is 33 kDa chaperonin, found in Streptococcus pyogenes serotype M4 (strain MGAS10750).